The primary structure comprises 647 residues: DNA mismatch repair protein MutL (647 aa).

A disordered region spans residues 375-395; it reads KQEEPQAVKQPPQLWQPPKQE. Over residues 383-395 the composition is skewed to low complexity; sequence KQPPQLWQPPKQE.

The protein belongs to the DNA mismatch repair MutL/HexB family.

This protein is involved in the repair of mismatches in DNA. It is required for dam-dependent methyl-directed DNA mismatch repair. May act as a 'molecular matchmaker', a protein that promotes the formation of a stable complex between two or more DNA-binding proteins in an ATP-dependent manner without itself being part of a final effector complex. This chain is DNA mismatch repair protein MutL, found in Bacillus cereus (strain B4264).